We begin with the raw amino-acid sequence, 631 residues long: Transcription factor dibT (631 aa).

Positions 11 to 38 (CWTCRLRRKRCDSVQPVCGSCQSLEITC) form a DNA-binding region, zn(2)-C6 fungal-type. Residues 123-144 (SLADSSASTPSTSSGRPTTLRS) are compositionally biased toward low complexity. Disordered stretches follow at residues 123-148 (SLADSSASTPSTSSGRPTTLRSSVDR) and 469-488 (GLKDLDTSPPSPQPTKTSAG).

It localises to the nucleus. Its function is as follows. Transcription factor; part of the gene cluster that mediates the biosynthesis of pestalotiollide B which is part of dibenzodioxocinones, a novel class of inhibitors against cholesterol ester transfer protein (CEPT). Acts as the key transcription factor within the cluster and positively regulates the expression of the cluster genes and the subsequent production of dibenzodioxocinones such as pestalotiollide B, pestalotiollide C, 1',2'-dehydropenicillide, 3'-methoxy-1',2'-dehydropenicillide and 1',2'-epoxy-3',4'-didehydropenicillide. Required for the expression of most PKS genes outside of the dibenzodioxocinones cluster, (43 out of 48 defined PKS genes), and promotes pigmentation of the mycelium and conidia. In Pestalotiopsis microspora, this protein is Transcription factor dibT.